The chain runs to 481 residues: Glutamyl-tRNA(Gln) amidotransferase subunit A (481 aa).

Residues lysine 76 and serine 151 each act as charge relay system in the active site. Serine 175 serves as the catalytic Acyl-ester intermediate.

This sequence belongs to the amidase family. GatA subfamily. In terms of assembly, heterotrimer of A, B and C subunits.

The catalysed reaction is L-glutamyl-tRNA(Gln) + L-glutamine + ATP + H2O = L-glutaminyl-tRNA(Gln) + L-glutamate + ADP + phosphate + H(+). In terms of biological role, allows the formation of correctly charged Gln-tRNA(Gln) through the transamidation of misacylated Glu-tRNA(Gln) in organisms which lack glutaminyl-tRNA synthetase. The reaction takes place in the presence of glutamine and ATP through an activated gamma-phospho-Glu-tRNA(Gln). This chain is Glutamyl-tRNA(Gln) amidotransferase subunit A, found in Neisseria meningitidis serogroup A / serotype 4A (strain DSM 15465 / Z2491).